Reading from the N-terminus, the 238-residue chain is Uroporphyrinogen-III C-methyltransferase (238 aa).

S-adenosyl-L-homocysteine contacts are provided by residues proline 11, 87-89, 117-118, and methionine 170; these read GGD and TS.

The protein belongs to the precorrin methyltransferase family. In terms of assembly, monomer.

The enzyme catalyses uroporphyrinogen III + 2 S-adenosyl-L-methionine = precorrin-2 + 2 S-adenosyl-L-homocysteine + H(+). It participates in cofactor biosynthesis; adenosylcobalamin biosynthesis; precorrin-2 from uroporphyrinogen III: step 1/1. Its pathway is porphyrin-containing compound metabolism; siroheme biosynthesis; precorrin-2 from uroporphyrinogen III: step 1/1. Its activity is regulated as follows. SUMT exhibits a substrate inhibition phenomenon at uroporphyrinogen III concentrations above 0.5 uM; this property might play a regulatory role in cobalamin biosynthesis. Functionally, catalyzes the two successive C-2 and C-7 methylation reactions involved in the conversion of uroporphyrinogen III to precorrin-2 via the intermediate formation of precorrin-1. It is a step in the biosynthesis of both cobalamin (vitamin B12) and siroheme. This Priestia megaterium (Bacillus megaterium) protein is Uroporphyrinogen-III C-methyltransferase.